Here is a 343-residue protein sequence, read N- to C-terminus: Holliday junction branch migration complex subunit RuvB (343 aa).

A disordered region spans residues 1-20; it reads MEEMASRMISGDPELGEPFQ. Residues 1 to 185 are large ATPase domain (RuvB-L); sequence MEEMASRMIS…FGILARMQFY (185 aa). Residues L24, R25, G66, K69, T70, T71, 132 to 134, R175, Y185, and R222 each bind ATP; that span reads EDF. Position 70 (T70) interacts with Mg(2+). The interval 186-256 is small ATPAse domain (RuvB-S); the sequence is EPDELQQIVT…LADRALLALE (71 aa). The segment at 259 to 343 is head domain (RuvB-H); sequence RNGLDNMDHR…PRPVQQGTLL (85 aa). The DNA site is built by R295, R314, and R319.

Belongs to the RuvB family. In terms of assembly, homohexamer. Forms an RuvA(8)-RuvB(12)-Holliday junction (HJ) complex. HJ DNA is sandwiched between 2 RuvA tetramers; dsDNA enters through RuvA and exits via RuvB. An RuvB hexamer assembles on each DNA strand where it exits the tetramer. Each RuvB hexamer is contacted by two RuvA subunits (via domain III) on 2 adjacent RuvB subunits; this complex drives branch migration. In the full resolvosome a probable DNA-RuvA(4)-RuvB(12)-RuvC(2) complex forms which resolves the HJ.

The protein localises to the cytoplasm. It catalyses the reaction ATP + H2O = ADP + phosphate + H(+). The RuvA-RuvB-RuvC complex processes Holliday junction (HJ) DNA during genetic recombination and DNA repair, while the RuvA-RuvB complex plays an important role in the rescue of blocked DNA replication forks via replication fork reversal (RFR). RuvA specifically binds to HJ cruciform DNA, conferring on it an open structure. The RuvB hexamer acts as an ATP-dependent pump, pulling dsDNA into and through the RuvAB complex. RuvB forms 2 homohexamers on either side of HJ DNA bound by 1 or 2 RuvA tetramers; 4 subunits per hexamer contact DNA at a time. Coordinated motions by a converter formed by DNA-disengaged RuvB subunits stimulates ATP hydrolysis and nucleotide exchange. Immobilization of the converter enables RuvB to convert the ATP-contained energy into a lever motion, pulling 2 nucleotides of DNA out of the RuvA tetramer per ATP hydrolyzed, thus driving DNA branch migration. The RuvB motors rotate together with the DNA substrate, which together with the progressing nucleotide cycle form the mechanistic basis for DNA recombination by continuous HJ branch migration. Branch migration allows RuvC to scan DNA until it finds its consensus sequence, where it cleaves and resolves cruciform DNA. This Magnetococcus marinus (strain ATCC BAA-1437 / JCM 17883 / MC-1) protein is Holliday junction branch migration complex subunit RuvB.